The chain runs to 1026 residues: SWI/SNF-related matrix-associated actin-dependent regulator of chromatin subfamily A containing DEAD/H box 1 (1026 aa).

N-acetylmethionine is present on methionine 1. Residues 1–82 (MNLFNLDRFR…DNERKASISY (82 aa)) form a disordered region. The segment covering 7-19 (DRFRFEKRNKIEE) has biased composition (basic and acidic residues). A Phosphothreonine modification is found at threonine 54. The residue at position 57 (serine 57) is a Phosphoserine. Phosphothreonine is present on threonine 71. Lysine 77 is covalently cross-linked (Glycyl lysine isopeptide (Lys-Gly) (interchain with G-Cter in SUMO2)). At serine 79 the chain carries Phosphoserine. A Glycyl lysine isopeptide (Lys-Gly) (interchain with G-Cter in SUMO2) cross-link involves residue lysine 84. Residues serine 124, serine 127, serine 132, serine 146, and serine 152 each carry the phosphoserine modification. In terms of domain architecture, CUE 1 spans 157 to 199 (LKDAKLQTLKELFPQRSDNDLLKLIESTSTMDGAIAAALLMFG). 2 disordered regions span residues 203 to 251 (GGPR…NWEK) and 302 to 328 (SQSE…KTKL). A phosphoserine mark is found at serine 211 and serine 214. Phosphotyrosine is present on tyrosine 217. Positions 226–238 (QSIKKTRLDHGEE) are enriched in basic and acidic residues. 2 positions are modified to phosphoserine: serine 239 and serine 242. The 44-residue stretch at 251 to 294 (KQESIVLKLQKEFPNFDKQELREVLKEHEWMYTEALESLKVFAE) folds into the CUE 2 domain. Serine 302 bears the Phosphoserine mark. The span at 314–323 (SRSQNYPKNA) shows a compositional bias: polar residues. Lysine 335 participates in a covalent cross-link: Glycyl lysine isopeptide (Lys-Gly) (interchain with G-Cter in SUMO2). The tract at residues 354-373 (VVEDSEYDSGSDVGSSLDED) is disordered. Lysine 471 participates in a covalent cross-link: Glycyl lysine isopeptide (Lys-Gly) (interchain with G-Cter in SUMO2). The Helicase ATP-binding domain maps to 509 to 677 (ALVHKHGLNG…MSLLNFVMPH (169 aa)). 521–529 (ADEMGLGKT) contacts ATP. A DEGH box motif is present at residues 628 to 631 (DEGH). The Nuclear localization signal signature appears at 721 to 738 (RRVKEEVLKQLPPKKDRI). A Glycyl lysine isopeptide (Lys-Gly) (interchain with G-Cter in SUMO2) cross-link involves residue lysine 724. One can recognise a Helicase C-terminal domain in the interval 858–1010 (VLGCILSELK…MTTVDEGDEG (153 aa)). 897-904 (YLRLDGKT) provides a ligand contact to ATP. Lysine 996 is covalently cross-linked (Glycyl lysine isopeptide (Lys-Gly) (interchain with G-Cter in SUMO2)). The DEGD box signature appears at 1005–1008 (DEGD).

The protein belongs to the SNF2/RAD54 helicase family. As to quaternary structure, binds to DNA preferentially in the vicinity of transcriptional start sites. Interacts with MSH2 and TRIM28. Part of a complex composed of TRIM28, HDAC1, HDAC2 and EHMT2. Interacts with PCNA. Isoform 1 is expressed ubiquitously. Isoform 3 is expressed mainly in skin and esophagus. Expressed in fibroblasts and keratinocytes (at protein level).

Its subcellular location is the nucleus. It is found in the chromosome. The enzyme catalyses ATP + H2O = ADP + phosphate + H(+). DNA helicase that possesses intrinsic ATP-dependent nucleosome-remodeling activity and is both required for DNA repair and heterochromatin organization. Promotes DNA end resection of double-strand breaks (DSBs) following DNA damage: probably acts by weakening histone DNA interactions in nucleosomes flanking DSBs. Required for the restoration of heterochromatin organization after replication. Acts at replication sites to facilitate the maintenance of heterochromatin by directing H3 and H4 histones deacetylation, H3 'Lys-9' trimethylation (H3K9me3) and restoration of silencing. The polypeptide is SWI/SNF-related matrix-associated actin-dependent regulator of chromatin subfamily A containing DEAD/H box 1 (Homo sapiens (Human)).